Consider the following 515-residue polypeptide: uncharacterized protein (515 aa).

Disordered stretches follow at residues Asp117–Gln188, Arg362–Met453, and Gly496–Asn515. 3 stretches are compositionally biased toward basic and acidic residues: residues Lys370–Glu380, Pro388–Glu402, and Pro428–Pro438. The span at Ala502–Asn515 shows a compositional bias: acidic residues.

This is an uncharacterized protein from Ostreid herpesvirus 1 (isolate France) (OsHV-1).